Consider the following 564-residue polypeptide: Dihydroxy-acid dehydratase (564 aa).

Residue D80 coordinates Mg(2+). A [2Fe-2S] cluster-binding site is contributed by C121. D122 and K123 together coordinate Mg(2+). K123 bears the N6-carboxylysine mark. Residue C194 participates in [2Fe-2S] cluster binding. E447 is a binding site for Mg(2+). S473 functions as the Proton acceptor in the catalytic mechanism.

The protein belongs to the IlvD/Edd family. Homodimer. It depends on [2Fe-2S] cluster as a cofactor. The cofactor is Mg(2+).

It carries out the reaction (2R)-2,3-dihydroxy-3-methylbutanoate = 3-methyl-2-oxobutanoate + H2O. The catalysed reaction is (2R,3R)-2,3-dihydroxy-3-methylpentanoate = (S)-3-methyl-2-oxopentanoate + H2O. Its pathway is amino-acid biosynthesis; L-isoleucine biosynthesis; L-isoleucine from 2-oxobutanoate: step 3/4. It functions in the pathway amino-acid biosynthesis; L-valine biosynthesis; L-valine from pyruvate: step 3/4. Functions in the biosynthesis of branched-chain amino acids. Catalyzes the dehydration of (2R,3R)-2,3-dihydroxy-3-methylpentanoate (2,3-dihydroxy-3-methylvalerate) into 2-oxo-3-methylpentanoate (2-oxo-3-methylvalerate) and of (2R)-2,3-dihydroxy-3-methylbutanoate (2,3-dihydroxyisovalerate) into 2-oxo-3-methylbutanoate (2-oxoisovalerate), the penultimate precursor to L-isoleucine and L-valine, respectively. The sequence is that of Dihydroxy-acid dehydratase from Listeria monocytogenes serotype 4a (strain HCC23).